The sequence spans 1226 residues: DNA-directed RNA polymerase subunit beta'' (1226 aa).

4 residues coordinate Zn(2+): Cys223, Cys297, Cys304, and Cys307.

Belongs to the RNA polymerase beta' chain family. RpoC2 subfamily. In terms of assembly, in plastids the minimal PEP RNA polymerase catalytic core is composed of four subunits: alpha, beta, beta', and beta''. When a (nuclear-encoded) sigma factor is associated with the core the holoenzyme is formed, which can initiate transcription. The cofactor is Zn(2+).

It is found in the plastid. The protein localises to the chloroplast. It carries out the reaction RNA(n) + a ribonucleoside 5'-triphosphate = RNA(n+1) + diphosphate. In terms of biological role, DNA-dependent RNA polymerase catalyzes the transcription of DNA into RNA using the four ribonucleoside triphosphates as substrates. In Pyropia yezoensis (Susabi-nori), this protein is DNA-directed RNA polymerase subunit beta''.